A 424-amino-acid polypeptide reads, in one-letter code: Serine--tRNA ligase (424 aa).

231 to 233 (TAE) is a binding site for L-serine. ATP is bound by residues 262-264 (RRE) and Val-278. Glu-285 is an L-serine binding site. Residue 349 to 352 (EVSS) coordinates ATP. Ser-384 provides a ligand contact to L-serine.

The protein belongs to the class-II aminoacyl-tRNA synthetase family. Type-1 seryl-tRNA synthetase subfamily. Homodimer. The tRNA molecule binds across the dimer.

It localises to the cytoplasm. The enzyme catalyses tRNA(Ser) + L-serine + ATP = L-seryl-tRNA(Ser) + AMP + diphosphate + H(+). It carries out the reaction tRNA(Sec) + L-serine + ATP = L-seryl-tRNA(Sec) + AMP + diphosphate + H(+). It functions in the pathway aminoacyl-tRNA biosynthesis; selenocysteinyl-tRNA(Sec) biosynthesis; L-seryl-tRNA(Sec) from L-serine and tRNA(Sec): step 1/1. Catalyzes the attachment of serine to tRNA(Ser). Is also able to aminoacylate tRNA(Sec) with serine, to form the misacylated tRNA L-seryl-tRNA(Sec), which will be further converted into selenocysteinyl-tRNA(Sec). The chain is Serine--tRNA ligase from Chlamydia abortus (strain DSM 27085 / S26/3) (Chlamydophila abortus).